The following is a 498-amino-acid chain: Serine hydroxymethyltransferase, mitochondrial (498 aa).

Lys273 is subject to N6-(pyridoxal phosphate)lysine.

Belongs to the SHMT family. As to quaternary structure, homotetramer. Requires pyridoxal 5'-phosphate as cofactor.

It is found in the mitochondrion. The catalysed reaction is (6R)-5,10-methylene-5,6,7,8-tetrahydrofolate + glycine + H2O = (6S)-5,6,7,8-tetrahydrofolate + L-serine. Its pathway is one-carbon metabolism; tetrahydrofolate interconversion. Its function is as follows. Interconversion of serine and glycine. This Kluyveromyces lactis (strain ATCC 8585 / CBS 2359 / DSM 70799 / NBRC 1267 / NRRL Y-1140 / WM37) (Yeast) protein is Serine hydroxymethyltransferase, mitochondrial (SHM1).